The following is a 299-amino-acid chain: Dye-decolorizing peroxidase YfeX (299 aa).

Asp-143 serves as the catalytic Proton acceptor. His-215 provides a ligand contact to heme.

Belongs to the DyP-type peroxidase family. Heme b is required as a cofactor.

It localises to the cytoplasm. In terms of biological role, has both general peroxidase activity and dye-decolorizing activity. Can catalyze the oxidation of both protoporphyrinogen IX and coproporphyrinogen III to their corresponding porphyrins. Also efficiently decolorizes the dyes alizarin red and Cibacron blue F3GA. In Escherichia coli (strain K12), this protein is Dye-decolorizing peroxidase YfeX (yfeX).